The following is a 419-amino-acid chain: E3 ubiquitin-protein ligase pellino homolog 2 (419 aa).

The region spanning 15–202 (EPVKYRELVV…HPQGGFTEES (188 aa)) is the FHA; atypical domain.

It belongs to the pellino family. Interacts with TRAF6, IRAK4 and MAP3K7. Interacts with IRAK1. Interacts with BCL10; this interaction is impaired by SOCS3. Post-translationally, phosphorylated by IRAK1 and IRAK4 enhancing its E3 ligase activity. In terms of tissue distribution, widely expressed both in embryos and adult. Weakly or not expressed in spleen and thymus.

It catalyses the reaction S-ubiquitinyl-[E2 ubiquitin-conjugating enzyme]-L-cysteine + [acceptor protein]-L-lysine = [E2 ubiquitin-conjugating enzyme]-L-cysteine + N(6)-ubiquitinyl-[acceptor protein]-L-lysine.. Its pathway is protein modification; protein ubiquitination. E3 ubiquitin ligase catalyzing the covalent attachment of ubiquitin moieties onto substrate proteins. Involved in the TLR and IL-1 signaling pathways via interaction with the complex containing IRAK kinases and TRAF6. Mediates IL1B-induced IRAK1 'Lys-63'-linked polyubiquitination and possibly 'Lys-48'-linked ubiquitination. May be important for LPS- and IL1B-induced MAP3K7-dependent, but not MAP3K3-dependent, NF-kappa-B activation. Can activate the MAP (mitogen activated protein) kinase pathway leading to activation of ELK1. This Mus musculus (Mouse) protein is E3 ubiquitin-protein ligase pellino homolog 2 (Peli2).